Here is a 346-residue protein sequence, read N- to C-terminus: Annexin A1 (346 aa).

Ala2 bears the N-acetylalanine mark. A Phosphoserine; by TRPM7 modification is found at Ser5. Gln19 participates in a covalent cross-link: Isoglutamyl lysine isopeptide (Gln-Lys) (interchain with K-?). Tyr21 carries the phosphotyrosine; by EGFR modification. Phosphoserine is present on residues Ser34 and Ser37. Residue Thr41 is modified to Phosphothreonine. Annexin repeat units follow at residues 42-113 (FNPS…ALLK), 114-185 (TPAQ…SLAK), 197-269 (DLAD…VIVK), and 273-344 (SQPM…ALCG). Lys58 is subject to N6-acetyllysine. 11 residues coordinate Ca(2+): Gly59, Val60, Glu62, Lys97, Leu100, Glu105, Met127, Gly129, Gly131, Thr132, and Glu134. Thr136 bears the Phosphothreonine mark. Ca(2+)-binding residues include Asp171, Gly210, and Arg213. Residue Lys214 forms a Glycyl lysine isopeptide (Lys-Gly) (interchain with G-Cter in SUMO1); alternate linkage. Lys214 is covalently cross-linked (Glycyl lysine isopeptide (Lys-Gly) (interchain with G-Cter in SUMO2); alternate). A Ca(2+)-binding site is contributed by Gly215. N6-acetyllysine is present on Lys239. 3 residues coordinate Ca(2+): Asp253, Glu255, and Leu256. A Glycyl lysine isopeptide (Lys-Gly) (interchain with G-Cter in SUMO1) cross-link involves residue Lys257. Glu261, Met286, Gly288, and Gly290 together coordinate Ca(2+). Position 312 is an N6-acetyllysine (Lys312). Cys324 and Cys343 form a disulfide bridge. Residues Leu328, Glu330, and Thr331 each contribute to the Ca(2+) site. Lys332 participates in a covalent cross-link: Glycyl lysine isopeptide (Lys-Gly) (interchain with G-Cter in SUMO1). Residue Glu336 coordinates Ca(2+).

The protein belongs to the annexin family. As to quaternary structure, homodimer; non-covalently linked. Homodimer; linked by transglutamylation. Homodimers linked by transglutamylation are observed in placenta, but not in other tissues. Interacts with S100A11. Heterotetramer, formed by two molecules each of S100A11 and ANXA1. Interacts with DYSF. Interacts with EGFR. Post-translationally, phosphorylated by protein kinase C, EGFR and TRPM7. Phosphorylated in response to EGF treatment. Sumoylated. In terms of processing, proteolytically cleaved by cathepsin CTSG to release the active N-terminal peptide Ac2-26. Detected on surface epithelia and mucosal glands in nasal cavity, trachea, bronchi and bronchioles. Detected in blood vessel endothelial cells. Detected in neutrophils (at protein level).

It is found in the nucleus. The protein resides in the cytoplasm. The protein localises to the cell projection. Its subcellular location is the cilium. It localises to the basolateral cell membrane. It is found in the lateral cell membrane. The protein resides in the cell membrane. The protein localises to the apical cell membrane. Its subcellular location is the membrane. It localises to the endosome membrane. It is found in the secreted. The protein resides in the extracellular space. The protein localises to the early endosome. Its subcellular location is the cytoplasmic vesicle membrane. It localises to the extracellular exosome. It is found in the cytoplasmic vesicle. The protein resides in the secretory vesicle lumen. The protein localises to the phagocytic cup. Its function is as follows. Plays important roles in the innate immune response as effector of glucocorticoid-mediated responses and regulator of the inflammatory process. Has anti-inflammatory activity. Plays a role in glucocorticoid-mediated down-regulation of the early phase of the inflammatory response. Contributes to the adaptive immune response by enhancing signaling cascades that are triggered by T-cell activation, regulates differentiation and proliferation of activated T-cells. Promotes the differentiation of T-cells into Th1 cells and negatively regulates differentiation into Th2 cells. Has no effect on unstimulated T-cells. Negatively regulates hormone exocytosis via activation of the formyl peptide receptors and reorganization of the actin cytoskeleton. Has high affinity for Ca(2+) and can bind up to eight Ca(2+) ions. Displays Ca(2+)-dependent binding to phospholipid membranes. Plays a role in the formation of phagocytic cups and phagosomes. Plays a role in phagocytosis by mediating the Ca(2+)-dependent interaction between phagosomes and the actin cytoskeleton. In terms of biological role, functions at least in part by activating the formyl peptide receptors and downstream signaling cascades. Promotes chemotaxis of granulocytes and monocytes via activation of the formyl peptide receptors. Promotes rearrangement of the actin cytoskeleton, cell polarization and cell migration. Promotes resolution of inflammation and wound healing. Acts via neutrophil N-formyl peptide receptors to enhance the release of CXCL2. This is Annexin A1 (ANXA1) from Bos taurus (Bovine).